The primary structure comprises 504 residues: Maturase K (504 aa).

It belongs to the intron maturase 2 family. MatK subfamily.

Its subcellular location is the plastid. It is found in the chloroplast. Its function is as follows. Usually encoded in the trnK tRNA gene intron. Probably assists in splicing its own and other chloroplast group II introns. This chain is Maturase K, found in Arabidopsis thaliana (Mouse-ear cress).